Consider the following 471-residue polypeptide: Putative multidrug resistance protein MdtD (471 aa).

Topologically, residues 1–11 (MTDLPDSTRWQ) are periplasmic. A helical transmembrane segment spans residues 12–32 (LWIVAFGFFMQSLDTTIVNTA). Over 33 to 48 (LPSMAQSLGESPLHMH) the chain is Cytoplasmic. Residues 49–69 (MVIVSYVLTVAVMLPASGWLA) form a helical membrane-spanning segment. Residues 70–76 (DKVGVRN) are Periplasmic-facing. Residues 77-97 (IFFTAIVLFTLGSLFCALSGT) traverse the membrane as a helical segment. The Cytoplasmic segment spans residues 98–101 (LNEL). A helical membrane pass occupies residues 102-124 (LLARALQGVGGAMMVPVGRLTVM). At 125 to 137 (KIVPREQYMAAMT) the chain is on the periplasmic side. The helical transmembrane segment at 138 to 158 (FVTLPGQVGPLLGPALGGLLV) threads the bilayer. Over 159 to 164 (EYASWH) the chain is Cytoplasmic. The chain crosses the membrane as a helical span at residues 165-185 (WIFLINIPVGIIGAIATLMLM). Residues 186–196 (PNYTMQTRRFD) lie on the Periplasmic side of the membrane. A helical transmembrane segment spans residues 197-217 (LSGFLLLAVGMAVLTLALDGS). At 218 to 224 (KGTGLSP) the chain is on the cytoplasmic side. Residues 225–245 (LTIAGLVAVGVVALVLYLLHA) traverse the membrane as a helical segment. Topologically, residues 246–262 (RNNNRALFSLKLFRTRT) are periplasmic. Residues 263-283 (FSLGLAGSFAGRIGSGMLPFM) form a helical membrane-spanning segment. Residues 284 to 285 (TP) are Cytoplasmic-facing. Residues 286–306 (VFLQIGLGFSPFHAGLMMIPM) traverse the membrane as a helical segment. The Periplasmic segment spans residues 307-341 (VLGSMGMKRIVVQVVNCFGYRRVLVATTLGLSLVT). A helical membrane pass occupies residues 342-362 (LLFMTTALLGWYYVLPFVLFL). Topologically, residues 363–395 (QGMVNSTRFSSMNTLTLKDLPDNLASSGNSLLS) are cytoplasmic. Residues 396–416 (MIMQLSMSIGVTIAGLLLGLF) form a helical membrane-spanning segment. Residues 417–430 (GSQHVSVDSGTTQT) are Periplasmic-facing. A helical membrane pass occupies residues 431–451 (VFMYTWLSMALIIALPAFIFA). Residues 452-471 (RVPNDTHQNVAISRRKRSAQ) are Cytoplasmic-facing.

The protein belongs to the major facilitator superfamily. TCR/Tet family.

The protein resides in the cell inner membrane. This is Putative multidrug resistance protein MdtD from Escherichia coli O139:H28 (strain E24377A / ETEC).